The following is a 343-amino-acid chain: 3-dehydroquinate synthase (343 aa).

Residues 61 to 66 (SGEKYK), 95 to 99 (GVISD), 119 to 120 (TT), Lys-132, Lys-141, and 159 to 162 (FLKT) each bind NAD(+). Positions 174, 231, and 248 each coordinate Zn(2+).

The protein belongs to the sugar phosphate cyclases superfamily. Dehydroquinate synthase family. Requires Co(2+) as cofactor. Zn(2+) is required as a cofactor. It depends on NAD(+) as a cofactor.

It localises to the cytoplasm. The enzyme catalyses 7-phospho-2-dehydro-3-deoxy-D-arabino-heptonate = 3-dehydroquinate + phosphate. It participates in metabolic intermediate biosynthesis; chorismate biosynthesis; chorismate from D-erythrose 4-phosphate and phosphoenolpyruvate: step 2/7. Functionally, catalyzes the conversion of 3-deoxy-D-arabino-heptulosonate 7-phosphate (DAHP) to dehydroquinate (DHQ). The sequence is that of 3-dehydroquinate synthase from Helicobacter pylori (strain HPAG1).